A 118-amino-acid chain; its full sequence is Fluoride-specific ion channel FluC 2 (118 aa).

A run of 4 helical transmembrane segments spans residues Met1–Ile21, Phe33–Gly53, Gly55–Phe75, and Ile93–Met113. Na(+)-binding residues include Gly70 and Thr73.

This sequence belongs to the fluoride channel Fluc/FEX (TC 1.A.43) family.

It localises to the cell membrane. The catalysed reaction is fluoride(in) = fluoride(out). With respect to regulation, na(+) is not transported, but it plays an essential structural role and its presence is essential for fluoride channel function. Fluoride-specific ion channel. Important for reducing fluoride concentration in the cell, thus reducing its toxicity. The sequence is that of Fluoride-specific ion channel FluC 2 from Bacillus cereus (strain ATCC 10987 / NRS 248).